A 357-amino-acid chain; its full sequence is Arginine kinase (357 aa).

Residues 9 to 91 (KLEAGFKKLQ…FNPIIEDYHE (83 aa)) enclose the Phosphagen kinase N-terminal domain. 64–66 (GVG) is an L-arginine binding site. The Phosphagen kinase C-terminal domain occupies 119 to 356 (YVVSTHVRCG…LEMIKMEEAA (238 aa)). Residues 122–126 (STHVR) and histidine 185 contribute to the ATP site. Residue glutamate 225 participates in L-arginine binding. An ATP-binding site is contributed by arginine 229. Cysteine 271 is a binding site for L-arginine. ATP contacts are provided by residues 280 to 284 (RASVH) and 309 to 314 (RGTRGE).

This sequence belongs to the ATP:guanido phosphotransferase family.

The catalysed reaction is L-arginine + ATP = N(omega)-phospho-L-arginine + ADP + H(+). In terms of biological role, catalyzes the reversible transfer of high energy ATP gamma-phosphate group to L-arginine. The protein is Arginine kinase of Polybetes pythagoricus (South American huntsman spider).